The following is a 340-amino-acid chain: Guanine nucleotide-binding protein G(I)/G(S)/G(T) subunit beta-3 (340 aa).

7 WD repeats span residues 53-83 (GHLAKIYAMHWATDSKLLVSASQDGKLIVWD), 95-125 (LRSSWVMTCAYAPSGNFVACGGLDNMCSIYN), 141-170 (AHTGYLSCCRFLDDNNIVTSSGDTTCALWD), 182-212 (GHTGDCMSLAVSPDFNLFISGACDASAKLWD), 224-254 (GHESDINAICFFPNGEAICTGSDDASCRLFD), 268-298 (SIICGITSVAFSLSGRLLFAGYDDFNCNVWD), and 310-340 (GHDNRVSCLGVTADGMAVATGSWDSFLKIWN).

It belongs to the WD repeat G protein beta family. As to quaternary structure, g proteins are composed of 3 units, alpha, beta and gamma. Interacts with RASD2.

Functionally, guanine nucleotide-binding proteins (G proteins) are involved as a modulator or transducer in various transmembrane signaling systems. The beta and gamma chains are required for the GTPase activity, for replacement of GDP by GTP, and for G protein-effector interaction. This Homo sapiens (Human) protein is Guanine nucleotide-binding protein G(I)/G(S)/G(T) subunit beta-3 (GNB3).